The primary structure comprises 305 residues: Homoserine O-acetyltransferase (305 aa).

Cysteine 142 serves as the catalytic Acyl-thioester intermediate. Residues lysine 163 and serine 192 each coordinate substrate. Catalysis depends on histidine 235, which acts as the Proton acceptor. Glutamate 237 is an active-site residue. Substrate is bound at residue arginine 249.

It belongs to the MetA family.

The protein localises to the cytoplasm. The enzyme catalyses L-homoserine + acetyl-CoA = O-acetyl-L-homoserine + CoA. Its pathway is amino-acid biosynthesis; L-methionine biosynthesis via de novo pathway; O-acetyl-L-homoserine from L-homoserine: step 1/1. In terms of biological role, transfers an acetyl group from acetyl-CoA to L-homoserine, forming acetyl-L-homoserine. In Bacteroides thetaiotaomicron (strain ATCC 29148 / DSM 2079 / JCM 5827 / CCUG 10774 / NCTC 10582 / VPI-5482 / E50), this protein is Homoserine O-acetyltransferase.